The following is a 404-amino-acid chain: Cytochrome P450 monooxygenase avaI (404 aa).

Cys382 contacts heme.

The protein belongs to the cytochrome P450 family. Heme is required as a cofactor.

It functions in the pathway secondary metabolite biosynthesis. Its function is as follows. Cytochrome P450 monooxygenase; part of the cluster that mediates the biosynthesis of a highly modified cyclo-arginine-tryptophan dipeptide (cRW). The first step of the pathway is perfornmed by the arginine-containing cyclodipeptide synthase (RCPDS) avaA that acts as the scaffold-generating enzyme and is responsible for formation of the cyclo-Arg-Trp (cRW) diketopiperazine. AvaB then acts as a multifunctional flavoenzyme that is responsible for generating the cyclo-Arg-formylkynurenine DKP, which can be deformylated by avaC. AvaB then further catalyzes an additional N-oxidation followed by cyclization and dehydration. The next step is an N-acetylation of the guanidine group catalyzed by the arginine N-acetyltransferase avaD. The roles of the additional enzymes identified within the ava cluster still have to be determined. This is Cytochrome P450 monooxygenase avaI from Aspergillus versicolor.